The following is a 337-amino-acid chain: Mitochondrial metalloendopeptidase OMA1 (337 aa).

The Mitochondrial matrix portion of the chain corresponds to 1 to 68 (MFLNKYISNY…QPNPRDKRFQ (68 aa)). The chain crosses the membrane as a helical span at residues 69-89 (WIFGALIAGGGVYYFTHLEYV). Topologically, residues 90–337 (PISNRRRFND…MLQSFKEVHW (248 aa)) are mitochondrial intermembrane. H195 contributes to the Zn(2+) binding site. Residue E196 is part of the active site. 2 residues coordinate Zn(2+): H199 and E250. A disulfide bridge connects residues C265 and C321.

Belongs to the peptidase M48 family. Zn(2+) serves as cofactor.

Its subcellular location is the mitochondrion inner membrane. Protease activity is induced in response to various mitochondrial stress. Its function is as follows. Protease that is part of the quality control system in the inner membrane of mitochondria. Cleaves and thereby promotes the turnover of mistranslated or misfolded membrane protein. This is Mitochondrial metalloendopeptidase OMA1 from Schizosaccharomyces pombe (strain 972 / ATCC 24843) (Fission yeast).